A 386-amino-acid polypeptide reads, in one-letter code: Glucose-1-phosphate adenylyltransferase (386 aa).

Alpha-D-glucose 1-phosphate is bound by residues Tyr100, Gly165, 180–181 (EK), and Ser191.

This sequence belongs to the bacterial/plant glucose-1-phosphate adenylyltransferase family. As to quaternary structure, homotetramer.

It carries out the reaction alpha-D-glucose 1-phosphate + ATP + H(+) = ADP-alpha-D-glucose + diphosphate. It participates in glycan biosynthesis; glycogen biosynthesis. Involved in the biosynthesis of ADP-glucose, a building block required for the elongation reactions to produce glycogen. Catalyzes the reaction between ATP and alpha-D-glucose 1-phosphate (G1P) to produce pyrophosphate and ADP-Glc. This is Glucose-1-phosphate adenylyltransferase from Clostridium beijerinckii (strain ATCC 51743 / NCIMB 8052) (Clostridium acetobutylicum).